The sequence spans 266 residues: MVAKNVKTFALGVEYDGSYYHGWQRQKIVPSIQEEIEKALSIIANHKIDVVCAGRTDAGVHSIGQVIHFKTTANRKKSSWSIGVNSYLSENISVVWVKEVTENFHARYSAITRSYRYIIYNYSLRSAIFQTKLNHIYRKLNVDKMHFEAQFLLGEHDFTSFRALGCQSHSPWRNITKLNVFRFHNWVVVDITANSFLHHMVRNIVGSLIEVGISKKKEYWIKDLLEKKDRSHAGATAPAKGLYLVYVEYPLHFNLPRSAYTSIFFK.

Asp-57 (nucleophile) is an active-site residue. Tyr-115 is a substrate binding site.

This sequence belongs to the tRNA pseudouridine synthase TruA family. In terms of assembly, homodimer.

It carries out the reaction uridine(38/39/40) in tRNA = pseudouridine(38/39/40) in tRNA. Its function is as follows. Formation of pseudouridine at positions 38, 39 and 40 in the anticodon stem and loop of transfer RNAs. The polypeptide is tRNA pseudouridine synthase A (Buchnera aphidicola subsp. Acyrthosiphon pisum (strain Tuc7)).